Consider the following 197-residue polypeptide: Guanylate kinase (197 aa).

The 179-residue stretch at 7–185 (GLIIILSSPS…TLKKIHEIIV (179 aa)) folds into the Guanylate kinase-like domain. 14–21 (SPSGTGKS) serves as a coordination point for ATP.

It belongs to the guanylate kinase family.

The protein localises to the cytoplasm. It carries out the reaction GMP + ATP = GDP + ADP. Essential for recycling GMP and indirectly, cGMP. The protein is Guanylate kinase of Rickettsia typhi (strain ATCC VR-144 / Wilmington).